The chain runs to 152 residues: Transcriptional regulator MraZ (152 aa).

SpoVT-AbrB domains lie at 5 to 52 (LNPI…THPQ) and 81 to 124 (ATEV…GKSQ).

Belongs to the MraZ family. In terms of assembly, forms oligomers.

Its subcellular location is the cytoplasm. It is found in the nucleoid. In Coxiella burnetii (strain Dugway 5J108-111), this protein is Transcriptional regulator MraZ.